Reading from the N-terminus, the 290-residue chain is Shikimate dehydrogenase (NADP(+)) (290 aa).

Shikimate is bound by residues 18-20 (SYS) and threonine 66. The Proton acceptor role is filled by lysine 70. Residues asparagine 91 and aspartate 106 each contribute to the shikimate site. Residues 130 to 134 (GNGGA) and methionine 230 contribute to the NADP(+) site. Shikimate is bound at residue tyrosine 232. Glycine 253 lines the NADP(+) pocket.

This sequence belongs to the shikimate dehydrogenase family. In terms of assembly, homodimer.

It carries out the reaction shikimate + NADP(+) = 3-dehydroshikimate + NADPH + H(+). It functions in the pathway metabolic intermediate biosynthesis; chorismate biosynthesis; chorismate from D-erythrose 4-phosphate and phosphoenolpyruvate: step 4/7. In terms of biological role, involved in the biosynthesis of the chorismate, which leads to the biosynthesis of aromatic amino acids. Catalyzes the reversible NADPH linked reduction of 3-dehydroshikimate (DHSA) to yield shikimate (SA). The sequence is that of Shikimate dehydrogenase (NADP(+)) from Prosthecochloris aestuarii (strain DSM 271 / SK 413).